The primary structure comprises 348 residues: Macrophage-capping protein (348 aa).

The residue at position 1 (Met1) is an N-acetylmethionine. Residues 27–75 (EKLKPVPVAQENQGVFFSGDSYLVLHNGPEEVSHLHLWIGQQSSRDEQG) form a Gelsolin-like 1 repeat. The Nuclear localization signal motif lies at 137-146 (KKLYQVKGKK). Gelsolin-like repeat units follow at residues 148–188 (IRAT…LERN) and 261–307 (MNLT…KERQ). Ser337 is subject to Phosphoserine.

Belongs to the villin/gelsolin family. As to quaternary structure, interacts with NUP62. Interacts with NUTF2 and RAN; involved in CAPG nuclear import. Post-translationally, the N-terminus is blocked. In terms of tissue distribution, macrophages and macrophage-like cells.

Its subcellular location is the nucleus. It localises to the cytoplasm. The protein resides in the melanosome. It is found in the cell projection. The protein localises to the lamellipodium. Its subcellular location is the ruffle. Functionally, calcium-sensitive protein which reversibly blocks the barbed ends of actin filaments but does not sever preformed actin filaments. May play an important role in macrophage function. May play a role in regulating cytoplasmic and/or nuclear structures through potential interactions with actin. May bind DNA. In Homo sapiens (Human), this protein is Macrophage-capping protein (CAPG).